Here is a 326-residue protein sequence, read N- to C-terminus: Phenylserine dehydratase (326 aa).

Monomer. Requires pyridoxal 5'-phosphate as cofactor.

The catalysed reaction is L-threo-3-phenylserine = 3-phenylpyruvate + NH4(+). With respect to regulation, inhibited by phenylhydrazine, hydroxylamine, p-chloromercuribenzoate, and HgCl(2). The sequence is that of Phenylserine dehydratase from Ralstonia pickettii (Burkholderia pickettii).